Consider the following 117-residue polypeptide: Appetite-regulating hormone (117 aa).

A signal peptide spans 1–23 (MPSPGTVCSLLLFSMLWADLAMA). A lipid anchor (O-decanoyl serine; alternate) is attached at Ser-26. The O-hexanoyl serine; alternate moiety is linked to residue Ser-26. A lipid anchor (O-octanoyl serine; alternate) is attached at Ser-26. Positions 29–52 (SPEHQKVQQRKESKKPPAKLQPRA) are disordered. Residues 31 to 43 (EHQKVQQRKESKK) are compositionally biased toward basic and acidic residues. The propeptide at 52–75 (ALEGLIHPEDTSQVEGAEDELEIR) is removed in mature form. A Leucine amide modification is found at Leu-98. Positions 99 to 117 (GKFLQDVLWEEADEVLADE) are cleaved as a propeptide — removed in mature form.

This sequence belongs to the motilin family. O-octanoylated by GOAT/MBOAT4. O-octanoylation or O-decanoylation is essential for ghrelin activity. The O-decanoylated forms Ghrelin-27-C10 and Ghrelin-28-C10 differ in the length of the carbon backbone of the carboxylic acid bound to Ser-26. A small fraction of ghrelin, ghrelin-27-C10:1, ghrelin-27-C10:2, ghrelin-28-C8:1, ghrelin-28-C10:1, and ghrelin-28-C10:2, may be modified with singly or doubly unsaturated carboxylic acids. In terms of processing, amidation of Leu-98 is essential for obestatin activity.

It is found in the secreted. Functionally, ghrelin is the ligand for growth hormone secretagogue receptor type 1 (GHSR). Induces the release of growth hormone from the pituitary. Has an appetite-stimulating effect, induces adiposity and stimulates gastric acid secretion. Involved in growth regulation. Obestatin may be the ligand for GPR39. May have an appetite-reducing effect resulting in decreased food intake. May reduce gastric emptying activity and jejunal motility. This is Appetite-regulating hormone (GHRL) from Felis catus (Cat).